The sequence spans 342 residues: Probable dual-specificity RNA methyltransferase RlmN (342 aa).

Residue Glu-91 is the Proton acceptor of the active site. The 231-residue stretch at 97-327 (YRYGNTVCLS…VTVRRELGDE (231 aa)) folds into the Radical SAM core domain. Cys-104 and Cys-332 are disulfide-bonded. 3 residues coordinate [4Fe-4S] cluster: Cys-111, Cys-115, and Cys-118. S-adenosyl-L-methionine-binding positions include 158–159 (GE), Ser-190, 213–215 (SLH), and Asn-289. Cys-332 functions as the S-methylcysteine intermediate in the catalytic mechanism.

Belongs to the radical SAM superfamily. RlmN family. Requires [4Fe-4S] cluster as cofactor.

The protein localises to the cytoplasm. The enzyme catalyses adenosine(2503) in 23S rRNA + 2 reduced [2Fe-2S]-[ferredoxin] + 2 S-adenosyl-L-methionine = 2-methyladenosine(2503) in 23S rRNA + 5'-deoxyadenosine + L-methionine + 2 oxidized [2Fe-2S]-[ferredoxin] + S-adenosyl-L-homocysteine. It carries out the reaction adenosine(37) in tRNA + 2 reduced [2Fe-2S]-[ferredoxin] + 2 S-adenosyl-L-methionine = 2-methyladenosine(37) in tRNA + 5'-deoxyadenosine + L-methionine + 2 oxidized [2Fe-2S]-[ferredoxin] + S-adenosyl-L-homocysteine. Specifically methylates position 2 of adenine 2503 in 23S rRNA and position 2 of adenine 37 in tRNAs. The polypeptide is Probable dual-specificity RNA methyltransferase RlmN (Carboxydothermus hydrogenoformans (strain ATCC BAA-161 / DSM 6008 / Z-2901)).